An 89-amino-acid chain; its full sequence is Small ribosomal subunit protein uS15 (89 aa).

The protein belongs to the universal ribosomal protein uS15 family. Part of the 30S ribosomal subunit. Forms a bridge to the 50S subunit in the 70S ribosome, contacting the 23S rRNA.

Its function is as follows. One of the primary rRNA binding proteins, it binds directly to 16S rRNA where it helps nucleate assembly of the platform of the 30S subunit by binding and bridging several RNA helices of the 16S rRNA. Functionally, forms an intersubunit bridge (bridge B4) with the 23S rRNA of the 50S subunit in the ribosome. The polypeptide is Small ribosomal subunit protein uS15 (Zymomonas mobilis subsp. mobilis (strain ATCC 31821 / ZM4 / CP4)).